A 182-amino-acid polypeptide reads, in one-letter code: ATP-dependent protease subunit HslV (182 aa).

Thr9 is an active-site residue. Na(+)-binding residues include Ala167, Cys170, and Thr173.

The protein belongs to the peptidase T1B family. HslV subfamily. As to quaternary structure, a double ring-shaped homohexamer of HslV is capped on each side by a ring-shaped HslU homohexamer. The assembly of the HslU/HslV complex is dependent on binding of ATP.

The protein localises to the cytoplasm. The enzyme catalyses ATP-dependent cleavage of peptide bonds with broad specificity.. Allosterically activated by HslU binding. Functionally, protease subunit of a proteasome-like degradation complex believed to be a general protein degrading machinery. This chain is ATP-dependent protease subunit HslV, found in Enterococcus faecalis (strain ATCC 700802 / V583).